A 250-amino-acid polypeptide reads, in one-letter code: Probable transcriptional regulatory protein MAP_1030 (250 aa).

This sequence belongs to the TACO1 family.

The protein resides in the cytoplasm. The chain is Probable transcriptional regulatory protein MAP_1030 from Mycolicibacterium paratuberculosis (strain ATCC BAA-968 / K-10) (Mycobacterium paratuberculosis).